We begin with the raw amino-acid sequence, 89 residues long: Protein S100-A8 (89 aa).

EF-hand domains follow at residues 13–48 (IDVY…FVQN) and 46–81 (VQNI…VGVA). Zn(2+) contacts are provided by His17 and His27. Asp33 provides a ligand contact to Ca(2+). S-nitrosocysteine is present on Cys42. 4 residues coordinate Ca(2+): Asp59, Asn61, Asp63, and Glu70. His83 is a Zn(2+) binding site.

This sequence belongs to the S-100 family. Homodimer. Preferentially exists as a heterodimer or heterotetramer with S100A9 known as calprotectin (S100A8/A9). Calprotectin (S100A8/9) interacts with CEACAM3 and tubulin filaments in a calcium-dependent manner. Heterotetrameric calprotectin (S100A8/A9) interacts with ANXA6 and associates with tubulin filaments in activated monocytes. S100A8 and calprotectin (S100A8/9) interact with NCF2/P67PHOX, RAC1 and RAC2. Calprotectin (S100A8/9) interacts with CYBA and CYBB. S100A8 interacts with AGER, ATP2A2 and with the heterodimeric complex formed by TLR4 and LY96. Calprotectin (S100A8/9) interacts with NOS2 to form the iNOS-S100A8/A9 transnitrosylase complex. Calprotectin (S100A8/9) interacts with CD69.

It localises to the secreted. Its subcellular location is the cytoplasm. It is found in the cytoskeleton. The protein resides in the cell membrane. Its activity is regulated as follows. Calprotectin (S100A8/A9) activity on TLR4 signaling is inhibited by paquinimod. In terms of biological role, S100A8 is a calcium- and zinc-binding protein which plays a prominent role in the regulation of inflammatory processes and immune response. It can induce neutrophil chemotaxis and adhesion. Predominantly found as calprotectin (S100A8/A9) which has a wide plethora of intra- and extracellular functions. The intracellular functions include: facilitating leukocyte arachidonic acid trafficking and metabolism, modulation of the tubulin-dependent cytoskeleton during migration of phagocytes and activation of the neutrophilic NADPH-oxidase. Also participates in regulatory T-cell differentiation together with CD69. Activates NADPH-oxidase by facilitating the enzyme complex assembly at the cell membrane, transferring arachidonic acid, an essential cofactor, to the enzyme complex and S100A8 contributes to the enzyme assembly by directly binding to NCF2/P67PHOX. The extracellular functions involve pro-inflammatory, antimicrobial, oxidant-scavenging and apoptosis-inducing activities. Its pro-inflammatory activity includes recruitment of leukocytes, promotion of cytokine and chemokine production, and regulation of leukocyte adhesion and migration. Acts as an alarmin or a danger associated molecular pattern (DAMP) molecule and stimulates innate immune cells via binding to pattern recognition receptors such as Toll-like receptor 4 (TLR4) and receptor for advanced glycation endproducts (AGER). Binding to TLR4 and AGER activates the MAP-kinase and NF-kappa-B signaling pathways resulting in the amplification of the pro-inflammatory cascade. Has antimicrobial activity towards bacteria and fungi and exerts its antimicrobial activity probably via chelation of Zn(2+) which is essential for microbial growth. Can induce cell death via autophagy and apoptosis and this occurs through the cross-talk of mitochondria and lysosomes via reactive oxygen species (ROS) and the process involves BNIP3. Can regulate neutrophil number and apoptosis by an anti-apoptotic effect; regulates cell survival via ITGAM/ITGB and TLR4 and a signaling mechanism involving MEK-ERK. Its role as an oxidant scavenger has a protective role in preventing exaggerated tissue damage by scavenging oxidants. The iNOS-S100A8/A9 transnitrosylase complex is proposed to direct selective inflammatory stimulus-dependent S-nitrosylation of multiple targets such as GAPDH, ANXA5, EZR, MSN and VIM by recognizing a [IL]-x-C-x-x-[DE] motif; S100A8 seems to contribute to S-nitrosylation site selectivity. Its function is as follows. (Microbial infection) Upon infection by murine coronavirus (MHV-A59), induces expansion of aberrant immature neutrophils in a TLR4-dependent manner. This chain is Protein S100-A8, found in Mus musculus (Mouse).